We begin with the raw amino-acid sequence, 310 residues long: MLGKVNGVQIECLESMVINSREIYGKFMIEPLSYGQAITVGNALRRVLLSDVPGVTIVSVRIAGINHEFSTVKGVKEDVLEILLNLKNIVLKGNVLKNQIGRLKVQGPAIVTSGQIEFPLDITVVDPCQYIATISGNDYLEMELKVEKSSGYKLVETFSKKSPLDFLPIDSIFMPVKKVNYYVEEILDSKVAYEKLILELWTNGSLSPQQSINYASDNLVKLFNPLRVLDFSKESSSVYEQNSLIKQKLIEELCLSVRAYNCLKRVQVDSIGDLLEYSIGDLLEIKNFGQKSVEEVSKALYKKFGVKLKH.

Residues 1–230 (MLGKVNGVQI…KLFNPLRVLD (230 aa)) are alpha N-terminal domain (alpha-NTD). Residues 242 to 310 (NSLIKQKLIE…YKKFGVKLKH (69 aa)) are alpha C-terminal domain (alpha-CTD).

The protein belongs to the RNA polymerase alpha chain family. In terms of assembly, in plastids the minimal PEP RNA polymerase catalytic core is composed of four subunits: alpha, beta, beta', and beta''. When a (nuclear-encoded) sigma factor is associated with the core the holoenzyme is formed, which can initiate transcription.

Its subcellular location is the plastid. The protein resides in the chloroplast. It catalyses the reaction RNA(n) + a ribonucleoside 5'-triphosphate = RNA(n+1) + diphosphate. In terms of biological role, DNA-dependent RNA polymerase catalyzes the transcription of DNA into RNA using the four ribonucleoside triphosphates as substrates. This is DNA-directed RNA polymerase subunit alpha from Cyanidium caldarium (Red alga).